A 436-amino-acid polypeptide reads, in one-letter code: MSTGFFGDIAKVKYEGPDSTNPLAFRHYNKDEVVLGKRMEDHLRFAVAYWHTFTWPGGDPFGGQTFLRPWFNETMEAAKLKADVAFEFFTLLGSPYYCFHDADVRPEGKNFAENTKNLNEIVDYFAQKQADTGVKLLWGTANLFSNRRFMSGAATNPDPDVFAFSAATVKTCMDATHKLGGENYVLWGGREGYETLLNTDLKRELDQMGRFLNLVVEYKHKIGFKGAILIEPKPQEPTKHQYDYDVATVYGFLKKNGLENEVKLNIEQGHAILAGHSFEHELALANALGIFGSIDMNRNDYQSGWDTDQFPNNVPEMSLAYYQVLAGGGFKSGGTNFDSKLRRQSLDPADLLIGHIGGMDCCARGLKAAAKMIEDKALSQPLADRYAGWDSAEGQKLLRGEYSLDQIAQWVEAKDINPQPKSGKQELLENIVNRYV.

2 residues coordinate Mg(2+): Asp-306 and Asp-308.

It belongs to the xylose isomerase family. In terms of assembly, homotetramer. Mg(2+) is required as a cofactor.

It is found in the cytoplasm. The catalysed reaction is alpha-D-xylose = alpha-D-xylulofuranose. The sequence is that of Xylose isomerase from Rhizobium rhizogenes (strain K84 / ATCC BAA-868) (Agrobacterium radiobacter).